The primary structure comprises 664 residues: uncharacterized protein (664 aa).

Residues 1 to 35 form the signal peptide; that stretch reads MGVSVLTFHVSLFLKRILSIAFFLLSLSTLLRIVN. Asn-101 and Asn-138 each carry an N-linked (GlcNAc...) asparagine glycan. 2 Sel1-like repeats span residues 141 to 178 and 179 to 214; these read AFANNMMGFFYSTSFSEYASNNPALARIHWELAAKQGS and LDAHQFLAYHNLIALNMPQSDEEAVKHYKFISDHLF. N-linked (GlcNAc...) asparagine glycosylation is found at Asn-221, Asn-300, and Asn-371. Sel1-like repeat units follow at residues 337-372, 373-409, 410-441, and 442-477; these read AQSCGYLGLLHLFDKGPLFDIDKAYWWFKRGATKND, SNSYYGLGYMAYHGLTSNGVDREKGMRLINLAVMNEN, PHALMFLGLIRLEEARYEEAYHLFLRAATQKS, and VISYKYLADCYYNGTGTSRSMISASLYYKKFVEAIR. N-linked (GlcNAc...) asparagine glycans are attached at residues Asn-454 and Asn-537. Sel1-like repeat units follow at residues 564–599 and 601–636; these read IDAIFKLGDYYYYGIGTPKDYSKAYTCYKIAYEQSS and GMGLWNMAYMHEYGIGRDQDIYIARRLLDELSSNQN.

It belongs to the sel-1 family.

This is an uncharacterized protein from Schizosaccharomyces pombe (strain 972 / ATCC 24843) (Fission yeast).